The primary structure comprises 421 residues: Probable sugar-binding periplasmic protein (421 aa).

The first 27 residues, 1 to 27, serve as a signal peptide directing secretion; that stretch reads MHKLLKLAAMGTAACALLAGMAPVANA.

Belongs to the bacterial solute-binding protein 1 family.

It localises to the periplasm. Part of a binding-protein-dependent transport system for a sugar. The protein is Probable sugar-binding periplasmic protein of Brucella melitensis biotype 1 (strain ATCC 23456 / CCUG 17765 / NCTC 10094 / 16M).